An 853-amino-acid chain; its full sequence is Trimethylguanosine synthase (853 aa).

The disordered stretch occupies residues 53 to 80 (NNSGDQATEEEEGGYSCGTAESHDSKGI). Ser-55 is modified (phosphoserine). The residue at position 60 (Thr-60) is a Phosphothreonine. Ser-85, Ser-89, Ser-96, and Ser-141 each carry phosphoserine. Tyr-146 is subject to Phosphotyrosine. Residues 149 to 187 (DDILASDDPSSIEQYENTRTYELQSKKDTETENPPVENT) form a disordered region. Position 154 is a phosphoserine (Ser-154). Residues 156–171 (DPSSIEQYENTRTYEL) show a composition bias toward polar residues. The residue at position 189 (Ser-189) is a Phosphoserine. 2 disordered regions span residues 334 to 461 (SQLD…GGIP) and 527 to 632 (DEEA…KKVN). Low complexity predominate over residues 367-382 (NGGTNEESNSSGNTNT). A phosphoserine mark is found at Ser-412, Ser-438, and Ser-578. Residues 431–442 (DIDENPASDFDD) show a composition bias toward acidic residues. Over residues 564 to 578 (ETNNPEPEKCQSVSS) the composition is skewed to polar residues. Residues 608–619 (PDSRQAETEAEV) are compositionally biased toward basic and acidic residues. Positions 620-630 (KKKKNKKKNKK) are enriched in basic residues. The sufficient for catalytic activity stretch occupies residues 631–846 (VNGLPPEIAA…TITAYFGDLI (216 aa)). Residue Asp-719 coordinates S-adenosyl-L-methionine. Trp-766 contributes to the N(7)-methylguanosine binding site.

This sequence belongs to the methyltransferase superfamily. Trimethylguanosine synthase family. May form homooligomers. Interacts with CREBBP/CBP, EED/WAIT1, EP300/P300, NCOA6/PRIP, PPARBP/PBP and SMN. Ubiquitously expressed. High expression in heart, skeletal muscle, kidney, liver and placenta.

It is found in the cytoplasm. Its subcellular location is the nucleus. The protein resides in the cajal body. The protein localises to the nucleolus. It catalyses the reaction a 5'-end (N(7)-methyl 5'-triphosphoguanosine)-ribonucleoside in snRNA + S-adenosyl-L-methionine = a 5'-end (N(2),N(7)-dimethyl 5'-triphosphoguanosine)-ribonucleoside in snRNA + S-adenosyl-L-homocysteine + H(+). It carries out the reaction a 5'-end (N(7)-methyl 5'-triphosphoguanosine)-ribonucleoside in snoRNA + S-adenosyl-L-methionine = a 5'-end (N(2),N(7)-dimethyl 5'-triphosphoguanosine)-ribonucleoside in snoRNA + S-adenosyl-L-homocysteine + H(+). The catalysed reaction is a 5'-end (N(2),N(7)-dimethyl 5'-triphosphoguanosine)-ribonucleoside in snRNA + S-adenosyl-L-methionine = a 5'-end (N(2),N(2),N(7)-trimethyl 5'-triphosphoguanosine)-ribonucleoside in snRNA + S-adenosyl-L-homocysteine + H(+). The enzyme catalyses a 5'-end (N(2),N(7)-dimethyl 5'-triphosphoguanosine)-ribonucleoside in snoRNA + S-adenosyl-L-methionine = a 5'-end (N(2),N(2),N(7)-trimethyl 5'-triphosphoguanosine)-ribonucleoside in snoRNA + S-adenosyl-L-homocysteine + H(+). In terms of biological role, catalyzes the 2 serial methylation steps for the conversion of the 7-monomethylguanosine (m(7)G) caps of snRNAs and snoRNAs to a 2,2,7-trimethylguanosine (m(2,2,7)G) cap structure. The enzyme is specific for guanine, and N7 methylation must precede N2 methylation. Hypermethylation of the m7G cap of U snRNAs leads to their concentration in nuclear foci, their colocalization with coilin and the formation of canonical Cajal bodies (CBs). Plays a role in transcriptional regulation. The polypeptide is Trimethylguanosine synthase (TGS1) (Homo sapiens (Human)).